The chain runs to 350 residues: Induced myeloid leukemia cell differentiation protein Mcl-1 homolog (350 aa).

A Glycyl lysine isopeptide (Lys-Gly) (interchain with G-Cter in ubiquitin) cross-link involves residue K5. The segment at 23-95 is disordered; the sequence is AGSGGASSSG…GPNVSATPPR (73 aa). A compositionally biased stretch (low complexity) spans 31–41; it reads SGGRLLASGRE. Gly residues predominate over residues 50-61; it reads GGEAGAVIGGSA. The interval 104-175 is PEST-like; the sequence is RASPPEEMEG…PAEEEEDELY (72 aa). Residue S121 is modified to Phosphoserine. K136 is covalently cross-linked (Glycyl lysine isopeptide (Lys-Gly) (interchain with G-Cter in ubiquitin)). Residues 150–169 form a disordered region; that stretch reads ASSGPGMDGSLPSTPPPAEE. S159 carries the post-translational modification Phosphoserine; by GSK3-alpha and GSK3-beta. Phosphoserine is present on S162. T163 bears the Phosphothreonine mark. Residues K194 and K197 each participate in a glycyl lysine isopeptide (Lys-Gly) (interchain with G-Cter in ubiquitin) cross-link. The BH3 motif lies at 209-223; it reads ALETLQRVGDGVQRN. The BH1 motif lies at 252 to 272; the sequence is HVFSDGVTNWGRIVTLISFGA. Positions 304–319 match the BH2 motif; the sequence is DWLVKQRGWDGFVEFF. A helical membrane pass occupies residues 327-349; it reads GIRNVLLAFAGVAGVGAGLAYLI.

It belongs to the Bcl-2 family. In terms of assembly, interacts with HIF3A (via C-terminus domain). Interacts with BOK, BIK, BAX, BAK1, and TPT1. Interacts with unphosphorylated BAD. Interacts with BMF, BBC3 and PMAIP1. Interacts with BOP. Interacts with BCL2L11; may sequester BCL2L11 to prevent its pro-apoptotic activity. Interacts with GIMAP5 and HSPA8/HSC70; the interaction between HSPA8 and MCL1 is impaired in the absence of GIMAP5. Post-translationally, cleaved by CASP3 during apoptosis, yielding a pro-apoptotic C-terminal fragment. Rapidly degraded in the absence of phosphorylation in the PEST region. In terms of processing, phosphorylated on Ser-159, by GSK3, in response to IL3/interleukin-3 withdrawal. Phosphorylation at Ser-159 induces ubiquitination and proteasomal degradation, abrogating the anti-apoptotic activity. Treatment with taxol or okadaic acid induces phosphorylation on additional sites. Post-translationally, ubiquitinated. Ubiquitination is induced by phosphorylation at Ser-159. Deubiquitinated by USP20; leading to increased stability. As to expression, detected in peripheral blood mononuclear cells and bone marrow.

The protein localises to the membrane. The protein resides in the cytoplasm. Its subcellular location is the mitochondrion. It is found in the nucleus. It localises to the nucleoplasm. Involved in the regulation of apoptosis versus cell survival, and in the maintenance of viability but not of proliferation. Mediates its effects by interactions with a number of other regulators of apoptosis. This is Induced myeloid leukemia cell differentiation protein Mcl-1 homolog (MCL1) from Canis lupus familiaris (Dog).